The following is a 172-amino-acid chain: Endoribonuclease YbeY (172 aa).

Zn(2+) is bound by residues histidine 136, histidine 140, and histidine 146.

The protein belongs to the endoribonuclease YbeY family. Zn(2+) is required as a cofactor.

The protein resides in the cytoplasm. Functionally, single strand-specific metallo-endoribonuclease involved in late-stage 70S ribosome quality control and in maturation of the 3' terminus of the 16S rRNA. In Rickettsia canadensis (strain McKiel), this protein is Endoribonuclease YbeY.